Here is a 666-residue protein sequence, read N- to C-terminus: Magnesium-chelatase 67 kDa subunit (666 aa).

37–44 (GRRGTGKT) contacts ATP. Residues 327–367 (LPDEEEQMQPPPPPPPPPPPPEPDKPDDPETPPDEAPKDEQ) form a disordered region. Positions 335 to 347 (QPPPPPPPPPPPP) are enriched in pro residues. The VWFA domain occupies 475-661 (LIIFVVDASG…SLAETVKSGV (187 aa)).

It belongs to the Mg-chelatase subunits D/I family.

It carries out the reaction protoporphyrin IX + Mg(2+) + ATP + H2O = Mg-protoporphyrin IX + ADP + phosphate + 3 H(+). It functions in the pathway porphyrin-containing compound metabolism; bacteriochlorophyll biosynthesis. Involved in bacteriochlorophyll biosynthesis; introduces a magnesium ion into protoporphyrin IX to yield Mg-protoporphyrin IX. The polypeptide is Magnesium-chelatase 67 kDa subunit (bchD) (Heliobacterium mobile (Heliobacillus mobilis)).